Consider the following 100-residue polypeptide: Cell division protein DrpB (100 aa).

Residues 1-16 (MEYGSTKMEERLSRSP) lie on the Cytoplasmic side of the membrane. A helical membrane pass occupies residues 17-37 (GGKLALWAFYTWCGYFVWAMA). The Periplasmic portion of the chain corresponds to 38 to 64 (RYIWVMSRIPDAPVSGFESDLGSTAGK). Residues 65–85 (WLGALVGFLFMALVGALLGSI) traverse the membrane as a helical segment. Residues 86–100 (AWYTRPRPARSRRYE) are Cytoplasmic-facing.

The protein belongs to the DrpB family. In terms of assembly, bacterial adenylate cyclase hybrid (BACTH) studies show interaction of this protein with DamX, FtsI, FtsN, FtsQ, YmgF, DedD, FtsA and MalF, as well as weaker interactions with DedD, MalG and PBP2, but this assay often generates false positive results.

Its subcellular location is the cell inner membrane. Its function is as follows. A non-essential division protein that localizes to the septal ring in low ionic strength medium. In terms of biological role, localizes to the septal ring in about 30% of observed cells before cell constriction occurs; localization occurs in low ionic strength medium (0 NaCl) and requires FtsZ but not FtsEX. Overexpression partially restores correct FtsI localization to the division septum in an ftsEX deletion. Isolated as a multicopy suppressor of an ftsEX deletion mutant; it does not suppress other cell division defects (e.g. ftsA, ftsI, ftsQ or ftsZ). The sequence is that of Cell division protein DrpB from Escherichia coli (strain K12).